The sequence spans 180 residues: ATP-dependent protease subunit HslV (180 aa).

The active site involves T5. 3 residues coordinate Na(+): G161, C164, and T167.

Belongs to the peptidase T1B family. HslV subfamily. A double ring-shaped homohexamer of HslV is capped on each side by a ring-shaped HslU homohexamer. The assembly of the HslU/HslV complex is dependent on binding of ATP.

It localises to the cytoplasm. It carries out the reaction ATP-dependent cleavage of peptide bonds with broad specificity.. With respect to regulation, allosterically activated by HslU binding. In terms of biological role, protease subunit of a proteasome-like degradation complex believed to be a general protein degrading machinery. This chain is ATP-dependent protease subunit HslV, found in Campylobacter jejuni subsp. doylei (strain ATCC BAA-1458 / RM4099 / 269.97).